We begin with the raw amino-acid sequence, 293 residues long: Protein bcp-1 (293 aa).

Residues 1-12 show a composition bias toward basic and acidic residues; that stretch reads MGKKRSREEAQK. A disordered region spans residues 1 to 35; sequence MGKKRSREEAQKEVVQNDPTVDKMDEDSDSSDSDE. The span at 24–35 shows a compositional bias: acidic residues; the sequence is MDEDSDSSDSDE.

Belongs to the BCP1 family.

Its subcellular location is the cytoplasm. It is found in the nucleus. Involved in nuclear export, actin cytoskeleton organization and vesicular transport. This chain is Protein bcp-1 (bcp-1), found in Neurospora crassa (strain ATCC 24698 / 74-OR23-1A / CBS 708.71 / DSM 1257 / FGSC 987).